The chain runs to 141 residues: Prefoldin subunit alpha (141 aa).

It belongs to the prefoldin subunit alpha family. As to quaternary structure, heterohexamer of two alpha and four beta subunits.

It localises to the cytoplasm. In terms of biological role, molecular chaperone capable of stabilizing a range of proteins. Seems to fulfill an ATP-independent, HSP70-like function in archaeal de novo protein folding. The sequence is that of Prefoldin subunit alpha (pfdA) from Methanothermobacter thermautotrophicus (strain ATCC 29096 / DSM 1053 / JCM 10044 / NBRC 100330 / Delta H) (Methanobacterium thermoautotrophicum).